A 31-amino-acid polypeptide reads, in one-letter code: Photosystem II reaction center protein T (31 aa).

A helical transmembrane segment spans residues 3–23 (ALVYTFLLVGTLGIIFFAIFF).

Belongs to the PsbT family. In terms of assembly, PSII is composed of 1 copy each of membrane proteins PsbA, PsbB, PsbC, PsbD, PsbE, PsbF, PsbH, PsbI, PsbJ, PsbK, PsbL, PsbM, PsbT, PsbY, PsbZ, Psb30/Ycf12, at least 3 peripheral proteins of the oxygen-evolving complex and a large number of cofactors. It forms dimeric complexes.

The protein localises to the plastid. The protein resides in the chloroplast thylakoid membrane. Functionally, found at the monomer-monomer interface of the photosystem II (PS II) dimer, plays a role in assembly and dimerization of PSII. PSII is a light-driven water plastoquinone oxidoreductase, using light energy to abstract electrons from H(2)O, generating a proton gradient subsequently used for ATP formation. This is Photosystem II reaction center protein T from Mesostigma viride (Green alga).